A 185-amino-acid chain; its full sequence is Large ribosomal subunit protein uL5 (185 aa).

This sequence belongs to the universal ribosomal protein uL5 family. Part of the 50S ribosomal subunit; part of the 5S rRNA/L5/L18/L25 subcomplex. Contacts the 5S rRNA and the P site tRNA. Forms a bridge to the 30S subunit in the 70S ribosome.

This is one of the proteins that bind and probably mediate the attachment of the 5S RNA into the large ribosomal subunit, where it forms part of the central protuberance. In the 70S ribosome it contacts protein S13 of the 30S subunit (bridge B1b), connecting the 2 subunits; this bridge is implicated in subunit movement. Contacts the P site tRNA; the 5S rRNA and some of its associated proteins might help stabilize positioning of ribosome-bound tRNAs. The sequence is that of Large ribosomal subunit protein uL5 from Rhizobium etli (strain ATCC 51251 / DSM 11541 / JCM 21823 / NBRC 15573 / CFN 42).